Consider the following 208-residue polypeptide: Large ribosomal subunit protein bL25 (208 aa).

A disordered region spans residues 1–21 (MSNEFSLNAEKRDVQGKGASR).

Belongs to the bacterial ribosomal protein bL25 family. CTC subfamily. In terms of assembly, part of the 50S ribosomal subunit; part of the 5S rRNA/L5/L18/L25 subcomplex. Contacts the 5S rRNA. Binds to the 5S rRNA independently of L5 and L18.

In terms of biological role, this is one of the proteins that binds to the 5S RNA in the ribosome where it forms part of the central protuberance. The protein is Large ribosomal subunit protein bL25 of Hahella chejuensis (strain KCTC 2396).